The sequence spans 323 residues: UPF0200/UPF0201 protein AF_1395 (323 aa).

Residues 1 to 185 form a UPF0200 region; that stretch reads MVLEMKVIAF…EKIRQILLKL (185 aa). 12-19 provides a ligand contact to ATP; that stretch reads GYPLSGKS. Residues 186 to 323 form a UPF0201 region; the sequence is AKNVEIEIRT…GRPVKEIDKL (138 aa).

It in the N-terminal section; belongs to the UPF0200 family. In the C-terminal section; belongs to the UPF0201 family.

In Archaeoglobus fulgidus (strain ATCC 49558 / DSM 4304 / JCM 9628 / NBRC 100126 / VC-16), this protein is UPF0200/UPF0201 protein AF_1395.